The chain runs to 141 residues: Lutropin subunit beta (141 aa).

The signal sequence occupies residues 1–20 (MEMLQGLLLLLLLSMGGAWA). Cystine bridges form between Cys29/Cys77, Cys43/Cys92, Cys46/Cys130, Cys54/Cys108, Cys58/Cys110, and Cys113/Cys120. N-linked (GlcNAc...) asparagine glycosylation is found at Asn33 and Asn50.

This sequence belongs to the glycoprotein hormones subunit beta family. In terms of assembly, heterodimer of a common alpha chain and a unique beta chain which confers biological specificity to thyrotropin, lutropin, follitropin and gonadotropin.

Its subcellular location is the secreted. In terms of biological role, promotes spermatogenesis and ovulation by stimulating the testes and ovaries to synthesize steroids. This Gorilla gorilla gorilla (Western lowland gorilla) protein is Lutropin subunit beta (LHB).